The following is a 565-amino-acid chain: NAD-dependent malic enzyme (565 aa).

The active-site Proton donor is tyrosine 104. Arginine 157 lines the NAD(+) pocket. Lysine 175 functions as the Proton acceptor in the catalytic mechanism. Positions 246, 247, and 270 each coordinate a divalent metal cation. The NAD(+) site is built by aspartate 270 and asparagine 418.

This sequence belongs to the malic enzymes family. Homotetramer. Requires Mg(2+) as cofactor. Mn(2+) serves as cofactor.

It catalyses the reaction (S)-malate + NAD(+) = pyruvate + CO2 + NADH. It carries out the reaction oxaloacetate + H(+) = pyruvate + CO2. This chain is NAD-dependent malic enzyme, found in Serratia proteamaculans (strain 568).